The following is a 928-amino-acid chain: Serine/threonine-protein kinase atg1 (928 aa).

The region spanning 6-315 (YTRLDEIGRG…FPEFFENEVI (310 aa)) is the Protein kinase domain. ATP contacts are provided by residues 12–20 (IGRGSFATV) and Lys35. Asp149 (proton acceptor) is an active-site residue. Disordered regions lie at residues 318 to 470 (PIPG…EQER) and 544 to 571 (FSGRSRADSTHHRQASYERRYGQSPTSA). Residues 359–371 (TRREREVNREDVY) show a composition bias toward basic and acidic residues. Positions 437-452 (TTTAIERQRSRNTYSE) are enriched in polar residues. Composition is skewed to basic and acidic residues over residues 459-470 (QPADKLKEEQER) and 548-564 (SRADSTHHRQASYERRY).

Belongs to the protein kinase superfamily. Ser/Thr protein kinase family. APG1/unc-51/ULK1 subfamily. In terms of assembly, homodimer. Forms a ternary complex with ATG13 and ATG17.

Its subcellular location is the cytoplasm. It localises to the preautophagosomal structure membrane. It catalyses the reaction L-seryl-[protein] + ATP = O-phospho-L-seryl-[protein] + ADP + H(+). It carries out the reaction L-threonyl-[protein] + ATP = O-phospho-L-threonyl-[protein] + ADP + H(+). Functionally, serine/threonine protein kinase involved in the cytoplasm to vacuole transport (Cvt) and found to be essential in autophagy, where it is required for the formation of autophagosomes. Involved in the clearance of protein aggregates which cannot be efficiently cleared by the proteasome. Required for selective autophagic degradation of the nucleus (nucleophagy) as well as for mitophagy which contributes to regulate mitochondrial quantity and quality by eliminating the mitochondria to a basal level to fulfill cellular energy requirements and preventing excess ROS production. Also involved in endoplasmic reticulum-specific autophagic process, in selective removal of ER-associated degradation (ERAD) substrates. Plays a key role in ATG9 and ATG23 cycling through the pre-autophagosomal structure and is necessary to promote ATG18 binding to ATG9 through phosphorylation of ATG9. Catalyzes phosphorylation of ATG4, decreasing the interaction between ATG4 and ATG8 and impairing deconjugation of PE-conjugated forms of ATG8. The chain is Serine/threonine-protein kinase atg1 from Aspergillus clavatus (strain ATCC 1007 / CBS 513.65 / DSM 816 / NCTC 3887 / NRRL 1 / QM 1276 / 107).